The chain runs to 215 residues: Glycerol-3-phosphate acyltransferase (215 aa).

The next 5 helical transmembrane spans lie at 14 to 34 (SSSA…AVVV), 63 to 83 (TAAA…LWLA), 92 to 112 (WGAY…PLFL), 128 to 148 (MAIE…VAVF), and 154 to 174 (LAAL…SGAA).

The protein belongs to the PlsY family. Probably interacts with PlsX.

The protein localises to the cell inner membrane. The catalysed reaction is an acyl phosphate + sn-glycerol 3-phosphate = a 1-acyl-sn-glycero-3-phosphate + phosphate. It functions in the pathway lipid metabolism; phospholipid metabolism. Functionally, catalyzes the transfer of an acyl group from acyl-phosphate (acyl-PO(4)) to glycerol-3-phosphate (G3P) to form lysophosphatidic acid (LPA). This enzyme utilizes acyl-phosphate as fatty acyl donor, but not acyl-CoA or acyl-ACP. The chain is Glycerol-3-phosphate acyltransferase from Bordetella bronchiseptica (strain ATCC BAA-588 / NCTC 13252 / RB50) (Alcaligenes bronchisepticus).